The sequence spans 394 residues: Tyrosine--tRNA ligase, cytoplasmic (394 aa).

Serine 2 is subject to N-acetylserine. Tyrosine 43 is a binding site for L-tyrosine. The short motif at 48 to 56 (PTGRPHCGY) is the 'HIGH' region element. Positions 170, 174, 177, and 192 each coordinate L-tyrosine. Positions 227–231 (KMSAS) match the 'KMSKS' region motif. Serine 235 is modified (phosphoserine). The tract at residues 348–394 (QEASEKGYPVATPQKSKKAKKPKNKGTKYPGATKTNEIATKLEETKL) is disordered. The residue at position 359 (threonine 359) is a Phosphothreonine. The Nuclear localization signal signature appears at 360-378 (PQKSKKAKKPKNKGTKYPG). Basic residues predominate over residues 362-373 (KSKKAKKPKNKG).

This sequence belongs to the class-I aminoacyl-tRNA synthetase family. As to quaternary structure, homodimer. Interacts with KNR4/SMI1.

The protein resides in the cytoplasm. It localises to the nucleus. The enzyme catalyses tRNA(Tyr) + L-tyrosine + ATP = L-tyrosyl-tRNA(Tyr) + AMP + diphosphate + H(+). With respect to regulation, inhibited by N-ethylmaleimide and p-chloromercuribenzoate. In terms of biological role, catalyzes the attachment of L-tyrosine to tRNA(Tyr) in a two-step reaction: L-tyrosine is first activated by ATP to form Tyr-AMP and then transferred to the acceptor end of tRNA(Tyr). The specificity determinants on tRNA(Tyr) are the base pair C1-G72, the discriminator residue A73, and the three anticodon bases G34, U35 and A36. Also involved in nuclear tRNA export. Also attaches D-Tyr to tRNA(Tyr), this reaction is about 150-fold less efficient than attachment of L-Tyr. The chain is Tyrosine--tRNA ligase, cytoplasmic from Saccharomyces cerevisiae (strain ATCC 204508 / S288c) (Baker's yeast).